Consider the following 227-residue polypeptide: Phosphoglycolate phosphatase (227 aa).

The active-site Nucleophile is the aspartate 13. Residues aspartate 13, aspartate 15, and aspartate 176 each coordinate Mg(2+).

The protein belongs to the HAD-like hydrolase superfamily. CbbY/CbbZ/Gph/YieH family. The cofactor is Mg(2+).

The enzyme catalyses 2-phosphoglycolate + H2O = glycolate + phosphate. It participates in organic acid metabolism; glycolate biosynthesis; glycolate from 2-phosphoglycolate: step 1/1. Functionally, specifically catalyzes the dephosphorylation of 2-phosphoglycolate. Is involved in the dissimilation of the intracellular 2-phosphoglycolate formed during the DNA repair of 3'-phosphoglycolate ends, a major class of DNA lesions induced by oxidative stress. In Nitrosospira multiformis (strain ATCC 25196 / NCIMB 11849 / C 71), this protein is Phosphoglycolate phosphatase.